A 220-amino-acid chain; its full sequence is Histone deacetylase complex subunit SAP30 (220 aa).

Residues 1 to 129 (MNGFTPEEMS…QSVRNRRKRK (129 aa)) are interaction with NCOR1. Phosphothreonine is present on threonine 5. The Atypical zinc-finger motif lies at 67–115 (CCLREDGERCGRAAGNASFSKRIQKSISQKKVKIELDKSARHLYICDYH). Residue lysine 87 forms a Glycyl lysine isopeptide (Lys-Gly) (interchain with G-Cter in SUMO2) linkage. The disordered stretch occupies residues 123–143 (RNRRKRKGSDDDGGDSPVQDI). The interval 130-220 (GSDDDGGDSP…SDLKADSGVH (91 aa)) is interaction with SIN3A. 2 positions are modified to phosphoserine: serine 131 and serine 138. A Phosphothreonine modification is found at threonine 145. Glycyl lysine isopeptide (Lys-Gly) (interchain with G-Cter in SUMO2) cross-links involve residues lysine 194 and lysine 214.

The protein belongs to the SAP30 family. In terms of assembly, component of the histone deacetylase complex that includes at least SIN3A, HDAC1 and HDAC2. Found in a complex composed of at least SINHCAF, SIN3A, HDAC1, SAP30, RBBP4, OGT and TET1. Interacts with HDAC1. Interacts with SIN3A, SIN3B, HDAC2, RBBP4 and NCOR1. Interacts directly with SAMSN1. Interacts with HCFC1. Interacts with SAP30BP.

It is found in the nucleus. Involved in the functional recruitment of the Sin3-histone deacetylase complex (HDAC) to a specific subset of N-CoR corepressor complexes. Capable of transcription repression by N-CoR. Active in deacetylating core histone octamers (when in a complex) but inactive in deacetylating nucleosomal histones. The sequence is that of Histone deacetylase complex subunit SAP30 from Mus musculus (Mouse).